The primary structure comprises 674 residues: Enzymatic polyprotein (674 aa).

The segment at 40 to 130 (IELHCFVDTG…CQLYEPFIQF (91 aa)) is protease. D47 is an active-site residue. The Reverse transcriptase domain occupies 267-447 (LKVIKPSKSP…KKINFLGLEI (181 aa)).

It belongs to the caulimoviridae enzymatic polyprotein family.

The enzyme catalyses DNA(n) + a 2'-deoxyribonucleoside 5'-triphosphate = DNA(n+1) + diphosphate. Functionally, encodes for at least two polypeptides: protease (PR) and reverse transcriptase (RT). The protease processes the polyprotein in cis. Reverse transcriptase is multifunctional enzyme that converts the viral RNA genome into dsDNA in viral cytoplasmic capsids. This enzyme displays a DNA polymerase activity that can copy either DNA or RNA templates, and a ribonuclease H (RNase H) activity that cleaves the RNA strand of RNA-DNA heteroduplexes in a partially processive 3'- to 5'-endonucleasic mode. Neo-synthesized pregenomic RNA (pgRNA) are encapsidated, and reverse-transcribed inside the nucleocapsid. Partial (+)DNA is synthesized from the (-)DNA template and generates the relaxed circular DNA (RC-DNA) genome. After budding and infection, the RC-DNA migrates in the nucleus, and is converted into a plasmid-like covalently closed circular DNA (cccDNA). The polypeptide is Enzymatic polyprotein (Arabidopsis thaliana (Mouse-ear cress)).